The sequence spans 1159 residues: Syntaxin-binding protein 5-like (1159 aa).

The disordered stretch occupies residues 1 to 37; it reads MKKFRKVLDGLTTSSPVNPGGSPGCGSAAGTPSAAPT. Residues 25-37 are compositionally biased toward low complexity; it reads CGSAAGTPSAAPT. WD repeat units lie at residues 67–108, 115–154, 159–195, 214–248, 254–286, 307–350, 358–392, 414–491, 519–628, and 642–703; these read TALA…CHSQ, VLQM…SLKF, ITFC…GYVI, HLSD…DFRI, IHSV…TAKP, PILK…KAIT, IVDF…VVDL, TCTA…YKLK, QMIS…ELVV, and TCLD…STSG. 2 disordered regions span residues 571–604 and 690–770; these read SDTE…SVRD and LTRS…KAQS. Polar residues-rich tracts occupy residues 699-713 and 721-739; these read QSTS…NQVS and SPTS…SQPC. 4 WD repeats span residues 808 to 865, 874 to 946, 951 to 995, and 1009 to 1032; these read VTTL…TGTV, RFGF…QACL, ITES…LDVS, and CFTN…TYSQ. Positions 1094 to 1154 constitute a v-SNARE coiled-coil homology domain; the sequence is GIEGMKAAAG…HELMLKCKDK (61 aa).

The protein belongs to the WD repeat L(2)GL family.

The protein resides in the cytoplasm. It is found in the cell membrane. The protein localises to the membrane. Functionally, may play a role in vesicle trafficking and exocytosis. This is Syntaxin-binding protein 5-like (stxbp5l) from Danio rerio (Zebrafish).